The chain runs to 686 residues: ATP-dependent zinc metalloprotease FtsH 2 (686 aa).

At 1-11 the chain is on the cytoplasmic side; that stretch reads MKKNIKDIFKN. The helical transmembrane segment at 12–32 threads the bilayer; it reads FNIFWFCFIFLLLSLLYCLIM. Over 33-178 the chain is Extracellular; it reads MEISHQHDNN…LQRIPYQPYF (146 aa). Residues 179–199 traverse the membrane as a helical segment; that stretch reads GFAPFISAVNICILIIIFYFI. At 200–686 the chain is on the cytoplasmic side; it reads YNSIEKTSAQ…QKSEKEDCNK (487 aa). 272-279 lines the ATP pocket; that stretch reads GPPGVGKT. His-493 contacts Zn(2+). The active site involves Glu-494. 2 residues coordinate Zn(2+): His-497 and Asp-569.

The protein in the central section; belongs to the AAA ATPase family. It in the C-terminal section; belongs to the peptidase M41 family. In terms of assembly, homohexamer. Zn(2+) is required as a cofactor.

Its subcellular location is the cell membrane. Acts as a processive, ATP-dependent zinc metallopeptidase for both cytoplasmic and membrane proteins. Plays a role in the quality control of integral membrane proteins. The polypeptide is ATP-dependent zinc metalloprotease FtsH 2 (Phytoplasma mali (strain AT)).